The sequence spans 236 residues: UPF0502 protein Bpro_3844 (236 aa).

The protein belongs to the UPF0502 family.

The sequence is that of UPF0502 protein Bpro_3844 from Polaromonas sp. (strain JS666 / ATCC BAA-500).